A 66-amino-acid polypeptide reads, in one-letter code: Large ribosomal subunit protein bL33c (66 aa).

It belongs to the bacterial ribosomal protein bL33 family.

The protein resides in the plastid. It is found in the chloroplast. This is Large ribosomal subunit protein bL33c from Drimys granadensis.